Consider the following 319-residue polypeptide: L-lactate dehydrogenase 2 (319 aa).

Residues V17, D38, K43, Y69, and 83–84 (GA) each bind NAD(+). Positions 86 and 92 each coordinate substrate. NAD(+) is bound by residues S105, 122–124 (ATN), and S147. 124–127 (NPVD) contributes to the substrate binding site. 152–155 (DSGR) contacts substrate. Beta-D-fructose 1,6-bisphosphate is bound by residues R157 and H172. The active-site Proton acceptor is the H179. Y224 is subject to Phosphotyrosine. Substrate is bound at residue T233.

It belongs to the LDH/MDH superfamily. LDH family. In terms of assembly, homotetramer.

It localises to the cytoplasm. It carries out the reaction (S)-lactate + NAD(+) = pyruvate + NADH + H(+). It functions in the pathway fermentation; pyruvate fermentation to lactate; (S)-lactate from pyruvate: step 1/1. With respect to regulation, allosterically activated by fructose 1,6-bisphosphate (FBP). In terms of biological role, catalyzes the conversion of lactate to pyruvate. The sequence is that of L-lactate dehydrogenase 2 from Peribacillus psychrosaccharolyticus (Bacillus psychrosaccharolyticus).